A 110-amino-acid polypeptide reads, in one-letter code: HAPRLAKLLIQIRNASNNRRQHPPPPHTFTNNHCFILGADSACETRTALNLFLSMSLCVPPYFIHPTVTPFPIGTSTHDRTYYSQKYKRSVRPTANATICPPPPHTGLSY.

This is an uncharacterized protein from Human cytomegalovirus (strain AD169) (HHV-5).